The chain runs to 315 residues: Putative 2-hydroxyacid dehydrogenase HI_1556 (315 aa).

Residues T73, 156–157 (CL), 231–233 (TGR), and D257 contribute to the NAD(+) site. R233 is an active-site residue. E262 is a catalytic residue. H285 serves as the catalytic Proton donor. 285 to 288 (HIAW) is an NAD(+) binding site.

The protein belongs to the D-isomer specific 2-hydroxyacid dehydrogenase family.

This chain is Putative 2-hydroxyacid dehydrogenase HI_1556, found in Haemophilus influenzae (strain ATCC 51907 / DSM 11121 / KW20 / Rd).